A 1137-amino-acid chain; its full sequence is MSSSRSNNRATCSRSSSARSKHSARVVAQTPMDAQLHAEFEGSQRHFDYSSSVGAANRSGATTSNVSAYLQNMQRGRFVQPFGCLLAVHPETFALLAYSENAAEMLDLTPHAVPTIDQREALAVGTDVRTLFRSHSFVALQKAATFGDVNLLNPILVHARTSGKPFYAIMHRIDVGLVIDLEPVNPVDLPVTATGAIKSYKLAARAIARLQSLPSGNLSLLCDVLVREVSELTGYDRVMAYKFHEDEHGEVIAECKRSDLEPYLGLHYPATDIPQASRFLFMKNKVRMICDCSATPVKIIQDDSLTQPISICGSTLRAPHGCHAQYMASMGSVASLVMSVTINEDEDDDGDTGSDQQPKGRKLWGLMVCHHTSPRFVPFPLRYACEFLLQVFGIQINKEVELAAQAKERHILRTQTLLCDMLLRDAPVGIFTQSPNVMDLVKCDGAALYYQNQLWVLGSTPSEAEIKNIVAWLQEYHDGSTGLSTDSLVEAGYPGAAALGDVVYGMAAIKISSKDFIFWFRSHTAKEIKWGGAKHEPIDADDNGRKMHPRSSFKAFLEVVKWRSVPWEDVEMDAIHSLQLILRGSLQDEDANKNNNAKSIVTAPSDDMKKIQGLLELRTVTNEMVRLIETATAPILAVDITGSINGWNNKAAELTGLPVMEAIGKPLVDLVIDDSVEVVKQILNSALQGIEEQNLQIKLKTFNHQENNGPVILMVNACCSRDLSEKVVGVCFVAQDMTGQNIIMDKYTRIQGDYVAIVKNPSELIPPIFMINDLGSCLEWNEAMQKITGIKREDAVDKLLIGEVFTHHEYGCRVKDHGTLTKLSILMNTVISGQDPEKLLFGFFNTDGKYIESLMTATKRTDAEGKITGALCFLHVASPELQHALQVQKMSEQAAMNSFKELTYIRQELRNPLNGMQFTRNLLEPSDLTEEQRKLLASNVLCQEQLKKILHDTDLESIEQCYTEMSTVDFNLEEALNTVLMQAMPQSKEKQISIDRDWPAEVSCMHLCGDNLRLQQVLADFLACMLQFTQPAEGPIVLQVIPRMENIGSGMQIAHLEFRLVHPAPGVPEALIQEMFRHSPGASREGLGLYISQKLVKTMSGTVQYLRESESSSFIVLVEFPVAQLSTKRCKASTSKF.

Positions 1-18 (MSSSRSNNRATCSRSSSA) are enriched in low complexity. The segment at 1 to 27 (MSSSRSNNRATCSRSSSARSKHSARVV) is disordered. In terms of domain architecture, GAF spans 217–400 (NLSLLCDVLV…VFGIQINKEV (184 aa)). A phytochromobilin-binding site is contributed by C322. PAS domains are found at residues 620 to 690 (VTNE…LQGI) and 750 to 824 (IQGD…TKLS). The region spanning 904–1124 (YIRQELRNPL…IVLVEFPVAQ (221 aa)) is the Histidine kinase domain.

This sequence belongs to the phytochrome family. In terms of assembly, homodimer. In terms of processing, contains one covalently linked phytochromobilin chromophore.

Functionally, regulatory photoreceptor which exists in two forms that are reversibly interconvertible by light: the Pr form that absorbs maximally in the red region of the spectrum and the Pfr form that absorbs maximally in the far-red region. Photoconversion of Pr to Pfr induces an array of morphogenic responses, whereas reconversion of Pfr to Pr cancels the induction of those responses. Pfr controls the expression of a number of nuclear genes including those encoding the small subunit of ribulose-bisphosphate carboxylase, chlorophyll A/B binding protein, protochlorophyllide reductase, rRNA, etc. It also controls the expression of its own gene(s) in a negative feedback fashion. This is Phytochrome C (PHYC) from Oryza sativa subsp. indica (Rice).